Here is a 91-residue protein sequence, read N- to C-terminus: Envelope glycoprotein N (91 aa).

A signal peptide spans 1 to 23; it reads MGPPRRVCRAGLLFVLLVALAAG. The segment at 23–48 is disordered; the sequence is GDAGPRGEPPGEEGGRDGIGGARCET. The Virion surface segment spans residues 24-55; the sequence is DAGPRGEPPGEEGGRDGIGGARCETQNTGQMS. The helical transmembrane segment at 56–76 threads the bilayer; the sequence is APGALVPFYVGMASMGVCIIA. Residues 77 to 91 lie on the Intravirion side of the membrane; it reads HVCQICQRLLAAGHA.

Belongs to the herpesviridae glycoprotein N family. In terms of assembly, interacts (via N-terminus) with gM (via N-terminus). The gM-gN heterodimer forms the gCII complex.

It localises to the virion membrane. The protein resides in the host membrane. Its subcellular location is the host Golgi apparatus. It is found in the host trans-Golgi network. Envelope glycoprotein necessary for proper maturation of gM and modulation of its membrane fusion activity. Also plays a critical role in virion morphogenesis. The chain is Envelope glycoprotein N from Homo sapiens (Human).